A 254-amino-acid chain; its full sequence is 3-deoxy-manno-octulosonate cytidylyltransferase (254 aa).

It belongs to the KdsB family.

It is found in the cytoplasm. The enzyme catalyses 3-deoxy-alpha-D-manno-oct-2-ulosonate + CTP = CMP-3-deoxy-beta-D-manno-octulosonate + diphosphate. It functions in the pathway nucleotide-sugar biosynthesis; CMP-3-deoxy-D-manno-octulosonate biosynthesis; CMP-3-deoxy-D-manno-octulosonate from 3-deoxy-D-manno-octulosonate and CTP: step 1/1. It participates in bacterial outer membrane biogenesis; lipopolysaccharide biosynthesis. Functionally, activates KDO (a required 8-carbon sugar) for incorporation into bacterial lipopolysaccharide in Gram-negative bacteria. This Tolumonas auensis (strain DSM 9187 / NBRC 110442 / TA 4) protein is 3-deoxy-manno-octulosonate cytidylyltransferase.